The following is a 53-amino-acid chain: UPF0391 membrane protein Patl_1732 (53 aa).

A run of 2 helical transmembrane segments spans residues 4-24 and 28-48; these read WAVI…GGIA and AGIA…SVVM.

This sequence belongs to the UPF0391 family.

It localises to the cell membrane. This chain is UPF0391 membrane protein Patl_1732, found in Pseudoalteromonas atlantica (strain T6c / ATCC BAA-1087).